The following is a 762-amino-acid chain: 5-methyltetrahydropteroyltriglutamate--homocysteine methyltransferase (762 aa).

Residues 17-20 (REWK) and lysine 111 contribute to the 5-methyltetrahydropteroyltri-L-glutamate site. L-homocysteine is bound by residues 435 to 437 (IGS) and glutamate 488. Residues 435 to 437 (IGS) and glutamate 488 each bind L-methionine. Residues 519-520 (RC) and tryptophan 565 each bind 5-methyltetrahydropteroyltri-L-glutamate. Aspartate 603 serves as a coordination point for L-homocysteine. Residue aspartate 603 coordinates L-methionine. Residue glutamate 609 coordinates 5-methyltetrahydropteroyltri-L-glutamate. Zn(2+)-binding residues include histidine 645, cysteine 647, and glutamate 669. Catalysis depends on histidine 698, which acts as the Proton donor. Cysteine 730 provides a ligand contact to Zn(2+).

Belongs to the vitamin-B12 independent methionine synthase family. Zn(2+) is required as a cofactor.

The catalysed reaction is 5-methyltetrahydropteroyltri-L-glutamate + L-homocysteine = tetrahydropteroyltri-L-glutamate + L-methionine. The protein operates within amino-acid biosynthesis; L-methionine biosynthesis via de novo pathway; L-methionine from L-homocysteine (MetE route): step 1/1. Its function is as follows. Catalyzes the transfer of a methyl group from 5-methyltetrahydrofolate to homocysteine resulting in methionine formation. The chain is 5-methyltetrahydropteroyltriglutamate--homocysteine methyltransferase from Bacillus cereus (strain AH187).